The sequence spans 60 residues: Large ribosomal subunit protein bL32 (60 aa).

Positions 1-20 are enriched in basic residues; it reads MAVQKSRKSRSRRDMRRSHH. Residues 1–22 are disordered; it reads MAVQKSRKSRSRRDMRRSHHRM.

The protein belongs to the bacterial ribosomal protein bL32 family.

In Psychrobacter arcticus (strain DSM 17307 / VKM B-2377 / 273-4), this protein is Large ribosomal subunit protein bL32.